The following is a 164-amino-acid chain: Protein-export protein SecB (164 aa).

It belongs to the SecB family. Homotetramer, a dimer of dimers. One homotetramer interacts with 1 SecA dimer.

Its subcellular location is the cytoplasm. Its function is as follows. One of the proteins required for the normal export of preproteins out of the cell cytoplasm. It is a molecular chaperone that binds to a subset of precursor proteins, maintaining them in a translocation-competent state. It also specifically binds to its receptor SecA. This Rhodopseudomonas palustris (strain BisB18) protein is Protein-export protein SecB.